A 403-amino-acid polypeptide reads, in one-letter code: Methylthioribose-1-phosphate isomerase (403 aa).

Asp-277 (proton donor) is an active-site residue.

The protein belongs to the eIF-2B alpha/beta/delta subunits family. MtnA subfamily.

The protein localises to the cytoplasm. It is found in the nucleus. The catalysed reaction is 5-(methylsulfanyl)-alpha-D-ribose 1-phosphate = 5-(methylsulfanyl)-D-ribulose 1-phosphate. Its pathway is amino-acid biosynthesis; L-methionine biosynthesis via salvage pathway; L-methionine from S-methyl-5-thio-alpha-D-ribose 1-phosphate: step 1/6. In terms of biological role, catalyzes the interconversion of methylthioribose-1-phosphate (MTR-1-P) into methylthioribulose-1-phosphate (MTRu-1-P). This chain is Methylthioribose-1-phosphate isomerase, found in Lodderomyces elongisporus (strain ATCC 11503 / CBS 2605 / JCM 1781 / NBRC 1676 / NRRL YB-4239) (Yeast).